The primary structure comprises 1902 residues: Putative surface cell antigen sca1 (1902 aa).

The signal sequence occupies residues 1–28; the sequence is MNKLTEQHLLKKSRFLKYSLLASISVGA. Disordered stretches follow at residues 140-273, 420-485, 707-729, 858-885, and 1470-1548; these read GIEK…TFVP, QGVF…SRTA, TTTT…YSSS, NRRR…AWGN, and KSES…SDGD. Composition is skewed to polar residues over residues 146–159 and 168–197; these read QSQN…TEQM and TASS…SPEH. Positions 199–212 are enriched in low complexity; the sequence is TTAPGTPSSTPATP. The span at 225 to 238 shows a compositional bias: polar residues; sequence LGANTPPNINTNSK. The segment covering 246 to 264 has biased composition (low complexity); the sequence is SSSGPQQQAVQSSSQVKSE. Over residues 423–439 the composition is skewed to polar residues; sequence FNKNKSSGGNARKSSAG. Residues 445–482 show a composition bias toward basic and acidic residues; sequence KKQEAQKQLSEIKKQEKAIKTASDKAKEVAASAKKETS. A compositionally biased stretch (basic and acidic residues) spans 863–874; that stretch reads RDGETSKQRTVD. Over residues 1491-1507 the composition is skewed to low complexity; that stretch reads LSSLPALASSNESALAL. Residues 1521–1538 show a composition bias toward acidic residues; it reads SSEDEESYDSGFEEEEET. In terms of domain architecture, Autotransporter spans 1618–1902; the sequence is ESHIKRGLWM…QGSVKLKVNL (285 aa).

Its subcellular location is the cell outer membrane. The polypeptide is Putative surface cell antigen sca1 (sca1) (Rickettsia conorii (strain ATCC VR-613 / Malish 7)).